Consider the following 431-residue polypeptide: Levansucrase Lscbeta (431 aa).

Sucrose is bound by residues tryptophan 61, aspartate 62, alanine 148, arginine 218, and aspartate 219. Aspartate 62 acts as the Nucleophile in catalysis. Glutamate 303 (proton donor/acceptor) is an active-site residue.

It belongs to the glycosyl hydrolase 68 family. In terms of assembly, homodimer.

The catalysed reaction is [6)-beta-D-fructofuranosyl-(2-&gt;](n) alpha-D-glucopyranoside + sucrose = [6)-beta-D-fructofuranosyl-(2-&gt;](n+1) alpha-D-glucopyranoside + D-glucose. Its activity is regulated as follows. Sucrose hydrolase activity is negatively affected by salt concentration. The levan polymerization rate is constant regardless of sucrose concentration. Its function is as follows. Catalyzes the synthesis of levan, a fructose polymer, by transferring the fructosyl moiety from sucrose to a growing acceptor molecule. Also displays sucrose hydrolase activity. The polypeptide is Levansucrase Lscbeta (Pseudomonas syringae pv. actinidiae).